A 216-amino-acid chain; its full sequence is MAAGPRTSVLLAFGLLCLPWPQDVGAFPAMPLSSLFANAVLRAQHLHQLAADTYKEFERAYIPEGQRYSIQNAQAAFCFSETIPAPTGKDEAQQRSDMELLRFSLLLIQSWLGPVQLLSRVFTNSLVFGTSDRVYEKLRDLEEGIQALMRELEDGSPRAGQILKQTYDKFDTNLRSDDALLKNYGLLSCFKKDLHKAETYLRVMKCRRFVESSCAF.

The signal sequence occupies residues 1 to 26 (MAAGPRTSVLLAFGLLCLPWPQDVGA). His45 contacts Zn(2+). A disulfide bridge connects residues Cys78 and Cys189. Ser131 carries the phosphoserine modification. Zn(2+) is bound at residue Glu198. An intrachain disulfide couples Cys206 to Cys214.

The protein belongs to the somatotropin/prolactin family.

It is found in the secreted. Functionally, plays an important role in growth control. Its major role in stimulating body growth is to stimulate the liver and other tissues to secrete IGF1. It stimulates both the differentiation and proliferation of myoblasts. It also stimulates amino acid uptake and protein synthesis in muscle and other tissues. The protein is Somatotropin (GH1) of Equus caballus (Horse).